Reading from the N-terminus, the 137-residue chain is Large ribosomal subunit protein uL16 (137 aa).

The protein belongs to the universal ribosomal protein uL16 family. Part of the 50S ribosomal subunit.

Binds 23S rRNA and is also seen to make contacts with the A and possibly P site tRNAs. This is Large ribosomal subunit protein uL16 from Leuconostoc mesenteroides subsp. mesenteroides (strain ATCC 8293 / DSM 20343 / BCRC 11652 / CCM 1803 / JCM 6124 / NCDO 523 / NBRC 100496 / NCIMB 8023 / NCTC 12954 / NRRL B-1118 / 37Y).